The chain runs to 96 residues: Co-chaperonin GroES (96 aa).

It belongs to the GroES chaperonin family. Heptamer of 7 subunits arranged in a ring. Interacts with the chaperonin GroEL.

The protein resides in the cytoplasm. Its function is as follows. Together with the chaperonin GroEL, plays an essential role in assisting protein folding. The GroEL-GroES system forms a nano-cage that allows encapsulation of the non-native substrate proteins and provides a physical environment optimized to promote and accelerate protein folding. GroES binds to the apical surface of the GroEL ring, thereby capping the opening of the GroEL channel. The polypeptide is Co-chaperonin GroES (Haemophilus influenzae (strain PittEE)).